A 363-amino-acid chain; its full sequence is Protein RecA (363 aa).

Residue 66-73 coordinates ATP; sequence GPESSGKT. Positions 327-363 are disordered; the sequence is YGIDEKSIADRENPEKIKEKREETSEENKTDNSEKTK. The span at 329–363 shows a compositional bias: basic and acidic residues; that stretch reads IDEKSIADRENPEKIKEKREETSEENKTDNSEKTK.

Belongs to the RecA family.

The protein resides in the cytoplasm. Functionally, can catalyze the hydrolysis of ATP in the presence of single-stranded DNA, the ATP-dependent uptake of single-stranded DNA by duplex DNA, and the ATP-dependent hybridization of homologous single-stranded DNAs. It interacts with LexA causing its activation and leading to its autocatalytic cleavage. In Lactobacillus acidophilus (strain ATCC 700396 / NCK56 / N2 / NCFM), this protein is Protein RecA.